Here is a 201-residue protein sequence, read N- to C-terminus: MINRKKSIITLCFVLMLPFASWAEAPVIDDSENFAMIDRQEEYDAPLVNPKYDNPQIESAELDGSQNDNYSTDTSQSYDEPALVKEDRSTISDNAKLIDKIQQLQKEIQELRGQLEVQAHDLKLLQQQQVAFYKDLDSRLSNSSTSAKTIQNDKPATDVSLGSNSPATLKAASPQIKRGPSTGPSNSKPQPVIAVSRANPA.

2 disordered regions span residues 46–80 and 143–201; these read PLVNPKYDNPQIESAELDGSQNDNYSTDTSQSYDE and SSTS…ANPA. 2 stretches are compositionally biased toward polar residues: residues 64–78 and 143–167; these read GSQNDNYSTDTSQSY and SSTSAKTIQNDKPATDVSLGSNSPA.

This is an uncharacterized protein from Legionella pneumophila.